The sequence spans 504 residues: Probable cytochrome P450 6a21 (504 aa).

Cys449 is a heme binding site.

This sequence belongs to the cytochrome P450 family. Heme serves as cofactor.

Its subcellular location is the endoplasmic reticulum membrane. It localises to the microsome membrane. Functionally, may be involved in the metabolism of insect hormones and in the breakdown of synthetic insecticides. The sequence is that of Probable cytochrome P450 6a21 (Cyp6a21) from Drosophila melanogaster (Fruit fly).